Consider the following 373-residue polypeptide: Probable G-protein coupled receptor 45 (373 aa).

The Extracellular portion of the chain corresponds to 1–38 (MACNSTPMGTYEHLLLNVSNTLDPGDTPLSAPLRISLA). N-linked (GlcNAc...) asparagine glycosylation occurs at N17. A helical membrane pass occupies residues 39 to 59 (IMMLLMIVVGFLGNTVVCIIV). Residues 60-75 (YQRPAMRSAINLLLAT) are Cytoplasmic-facing. A helical membrane pass occupies residues 76 to 96 (LAFSDIMLSLCCMPFTAITLI). Residues 97–109 (TVRWHFGDHFCRL) lie on the Extracellular side of the membrane. Residues 110–130 (SATLYWFFVLEGVAILLIISV) traverse the membrane as a helical segment. At 131–149 (DRFLIIVQRQDKLNPRRAK) the chain is on the cytoplasmic side. The helical transmembrane segment at 150–170 (MIIAASWVLSFCISAPSFTGW) threads the bilayer. Topologically, residues 171 to 198 (TFMEVPARAPQCVLGYTEFPAERAYVVT) are extracellular. The chain crosses the membrane as a helical span at residues 199-219 (LVVAVFFAPFGVMLCSYLCIL). The Cytoplasmic segment spans residues 220 to 269 (NTVRKNAVRVHNQSDSLDLRQLTGAGLRRLRRQQQQASLDLSFKTKAFTT). A helical transmembrane segment spans residues 270–290 (ILILFVGFSLCWLPHSVYSLL). The Extracellular portion of the chain corresponds to 291–306 (SAFSRRFYYSASFYTT). Residues 307-327 (STCVLWLSYLKSVFNPIVYCW) form a helical membrane-spanning segment. Over 328-373 (RIKKFREACIELLPHTFQILPKVPERIQRKIQPSTIYVCNENQSAV) the chain is Cytoplasmic.

The protein belongs to the G-protein coupled receptor 1 family. Brain specific.

The protein localises to the cell membrane. Its function is as follows. Orphan receptor. May play a role in brain function. This chain is Probable G-protein coupled receptor 45 (Gpr45), found in Mus musculus (Mouse).